We begin with the raw amino-acid sequence, 231 residues long: Chromosome partition protein MukE (231 aa).

The interval threonine 204–alanine 231 is disordered. A compositionally biased stretch (acidic residues) spans glutamate 219–alanine 231.

The protein belongs to the MukE family. As to quaternary structure, interacts, and probably forms a ternary complex, with MukF and MukB. The complex formation is stimulated by calcium or magnesium.

It localises to the cytoplasm. Its subcellular location is the nucleoid. Involved in chromosome condensation, segregation and cell cycle progression. May participate in facilitating chromosome segregation by condensation DNA from both sides of a centrally located replisome during cell division. Probably acts via its interaction with MukB and MukF. The chain is Chromosome partition protein MukE from Vibrio cholerae serotype O1 (strain ATCC 39315 / El Tor Inaba N16961).